The following is a 368-amino-acid chain: 3-dehydroquinate synthase (368 aa).

This sequence belongs to the archaeal-type DHQ synthase family.

The catalysed reaction is 2-amino-2,3,7-trideoxy-D-lyxo-hept-6-ulosonate + NAD(+) + H2O = 3-dehydroquinate + NH4(+) + NADH + H(+). Catalyzes the oxidative deamination and cyclization of 2-amino-3,7-dideoxy-D-threo-hept-6-ulosonic acid (ADH) to yield 3-dehydroquinate (DHQ), which is fed into the canonical shikimic pathway of aromatic amino acid biosynthesis. The sequence is that of 3-dehydroquinate synthase from Methanobrevibacter smithii (strain ATCC 35061 / DSM 861 / OCM 144 / PS).